Reading from the N-terminus, the 141-residue chain is Large ribosomal subunit protein uL22c (141 aa).

Belongs to the universal ribosomal protein uL22 family. In terms of assembly, part of the 50S ribosomal subunit.

It is found in the plastid. The protein resides in the chloroplast. Functionally, this protein binds specifically to 23S rRNA. In terms of biological role, the globular domain of the protein is located near the polypeptide exit tunnel on the outside of the subunit, while an extended beta-hairpin is found that lines the wall of the exit tunnel in the center of the 70S ribosome. The polypeptide is Large ribosomal subunit protein uL22c (rpl22) (Chloranthus spicatus (Chulantree)).